A 217-amino-acid chain; its full sequence is Guanylate kinase (217 aa).

Positions 15–194 (GLMLVLSSPS…AYQRLKRILL (180 aa)) constitute a Guanylate kinase-like domain. 22–29 (SPSGAGKT) contributes to the ATP binding site.

Belongs to the guanylate kinase family.

The protein resides in the cytoplasm. The catalysed reaction is GMP + ATP = GDP + ADP. Functionally, essential for recycling GMP and indirectly, cGMP. The polypeptide is Guanylate kinase (Hyphomonas neptunium (strain ATCC 15444)).